The sequence spans 1154 residues: Voltage-gated inwardly rectifying potassium channel KCNH2 (1154 aa).

Topologically, residues 1–403 are cytoplasmic; the sequence is MPVRRGHVAP…RIHRWTILHY (403 aa). Residues 41–70 enclose the PAS domain; that stretch reads VIYCNDGFCELCGYSRAEVMQRPCTCDFLH. The PAC domain maps to 92-144; the sequence is RKVEIAFYRKDGSCFLCLVDVVPVKNEDGAVIMFILNFEVVMEKDMVGSPARD. Positions 233-312 are disordered; that stretch reads ALVGSGSPPA…ASTGAMHPLR (80 aa). Ser-239 bears the Phosphoserine mark. Residues 258-269 show a composition bias toward polar residues; it reads PDGSGSSCSLAR. Phosphoserine occurs at positions 283, 284, 320, and 351. A helical transmembrane segment spans residues 404–424; sequence SPFKAVWDWLILLLVIYTAVF. Over 425–450 the chain is Extracellular; that stretch reads TPYSAAFLLKETEEGSQAPDCGYACQ. Residues 451-471 form a helical membrane-spanning segment; sequence PLAVVDLIVDIMFIVDILINF. Over 472 to 495 the chain is Cytoplasmic; that stretch reads RTTYVNANEEVVSHPGRIAVHYFK. Residues 496 to 516 form a helical membrane-spanning segment; it reads GWFLIDMVAAIPFDLLIFGSG. At 517–520 the chain is on the extracellular side; it reads SEEL. A helical; Voltage-sensor membrane pass occupies residues 521-541; that stretch reads IGLLKTARLLRLVRVARKLDR. At 542–547 the chain is on the cytoplasmic side; that stretch reads YSEYGA. A helical membrane pass occupies residues 548–568; the sequence is AVLFLLMCTFALIAHWLACIW. Topologically, residues 569–611 are extracellular; that stretch reads YAIGNMEQPNMDSHIGWLHNLGDQIGKPYNSSGLGGPSIKDKY. Residues 612–632 constitute an intramembrane region (pore-forming); sequence VTALYFTFSSLTSVGFGNVSP. The Selectivity filter motif lies at 624–629; the sequence is SVGFGN. Residues 633–638 lie on the Extracellular side of the membrane; it reads NTNSEK. The chain crosses the membrane as a helical span at residues 639–659; that stretch reads IFSICVMLIGSLMYASIFGNV. The Cytoplasmic portion of the chain corresponds to 660 to 1154; that stretch reads SAIIQRLYSG…LHRHGSDPGS (495 aa). A cNMP-binding domain region spans residues 742 to 842; sequence PFRGATKGCL…IHRDDLLEVL (101 aa). A disordered region spans residues 870 to 985; the sequence is GSPGSTELEG…DVEKSSDTCN (116 aa). Ser-871 and Ser-874 each carry phosphoserine. Basic residues predominate over residues 883–892; it reads RQRKRKLSFR. Residues 916–927 are compositionally biased toward gly residues; that stretch reads GPSGRGQQGGPW. The segment covering 928–939 has biased composition (low complexity); that stretch reads GESLSSGPSSPE. Arg-1014 bears the Omega-N-methylarginine mark. A coiled-coil region spans residues 1037-1064; sequence RGDVESRLDALQRQLNRLETRLSADMAT. Residues 1125-1154 are disordered; the sequence is DGPARRLSLPGQLGALTSQPLHRHGSDPGS. A Phosphoserine modification is found at Ser-1132.

This sequence belongs to the potassium channel family. H (Eag) (TC 1.A.1.20) subfamily. Kv11.1/KCNH2 sub-subfamily. As to quaternary structure, the potassium channel is probably composed of a homo- or heterotetrameric complex of pore-forming alpha subunits that can associate with modulating beta subunits. Interacts with DNAJB12 and DNAJB14; chaperones DNAJB12 and DNAJB14 promote tetramerization. Heteromultimer with KCNH6/ERG2 and KCNH7/ERG3. Interacts with ALG10B. Forms a stable complex with KCNE1 or KCNE2, and that this heteromultimerization regulates Inward rectifier potassium channel activity. Interacts with CANX. The core-glycosylated, but not the fully glycosylated form interacts with RNF207. Interacts with NDFIP1 and NDFIP2; this interaction decreases the cell membrane expression by targeting KCNH2, through interaction with NEDD4L, for the degradation through the multivesicular bodies (MVBs)-lysosomal pathway. In terms of processing, phosphorylated on serine and threonine residues. Phosphorylation by PKA inhibits ion conduction.

It is found in the cell membrane. It carries out the reaction K(+)(in) = K(+)(out). In terms of biological role, pore-forming (alpha) subunit of voltage-gated inwardly rectifying potassium channel. Characterized by unusual gating kinetics by producing relatively small outward currents during membrane depolarization and large inward currents during subsequent repolarization which reflect a rapid inactivation during depolarization and quick recovery from inactivation but slow deactivation (closing) during repolarization. Channel properties are modulated by cAMP and subunit assembly. Forms a stable complex with KCNE1 or KCNE2, and that this heteromultimerization regulates inward rectifier potassium channel activity. In Sus scrofa (Pig), this protein is Voltage-gated inwardly rectifying potassium channel KCNH2.